Consider the following 306-residue polypeptide: D-alanine--D-alanine ligase (306 aa).

Positions 102–300 (KIIAASAGVS…YGDIVKWIVE (199 aa)) constitute an ATP-grasp domain. 128–183 (PMKPPYVIKPIREGSSFGVVIVGSDETMPLHDIMNNEWVYDDEIMVEKYVPGRELT) provides a ligand contact to ATP. Residues Asp253, Glu267, and Asn269 each coordinate Mg(2+).

It belongs to the D-alanine--D-alanine ligase family. Mg(2+) is required as a cofactor. Mn(2+) serves as cofactor.

The protein resides in the cytoplasm. It carries out the reaction 2 D-alanine + ATP = D-alanyl-D-alanine + ADP + phosphate + H(+). It functions in the pathway cell wall biogenesis; peptidoglycan biosynthesis. Cell wall formation. This is D-alanine--D-alanine ligase from Bartonella bacilliformis (strain ATCC 35685 / KC583 / Herrer 020/F12,63).